The sequence spans 100 residues: Nucleoid-associated protein RoseRS_1534 (100 aa).

This sequence belongs to the YbaB/EbfC family. As to quaternary structure, homodimer.

It is found in the cytoplasm. The protein resides in the nucleoid. Binds to DNA and alters its conformation. May be involved in regulation of gene expression, nucleoid organization and DNA protection. In Roseiflexus sp. (strain RS-1), this protein is Nucleoid-associated protein RoseRS_1534.